A 198-amino-acid chain; its full sequence is Glutamyl-tRNA(Gln) amidotransferase subunit C, mitochondrial (198 aa).

This sequence belongs to the GatC family. As to quaternary structure, subunit of the heterotrimeric GatCAB amidotransferase (AdT) complex, composed of A, B and C subunits.

The protein resides in the mitochondrion. It catalyses the reaction L-glutamyl-tRNA(Gln) + L-glutamine + ATP + H2O = L-glutaminyl-tRNA(Gln) + L-glutamate + ADP + phosphate + H(+). In terms of biological role, allows the formation of correctly charged Gln-tRNA(Gln) through the transamidation of misacylated Glu-tRNA(Gln) in the mitochondria. The reaction takes place in the presence of glutamine and ATP through an activated gamma-phospho-Glu-tRNA(Gln). In Caenorhabditis remanei (Caenorhabditis vulgaris), this protein is Glutamyl-tRNA(Gln) amidotransferase subunit C, mitochondrial.